The chain runs to 264 residues: Small ribosomal subunit protein eS1B (264 aa).

The segment at 233-264 (GEGGGSGKPAADETGAKVERADGYEPPVQESV) is disordered. Over residues 242-255 (AADETGAKVERADG) the composition is skewed to basic and acidic residues.

It belongs to the eukaryotic ribosomal protein eS1 family. In terms of assembly, component of the small ribosomal subunit. Mature ribosomes consist of a small (40S) and a large (60S) subunit. The 40S subunit contains about 33 different proteins and 1 molecule of RNA (18S). The 60S subunit contains about 49 different proteins and 3 molecules of RNA (28S, 5.8S and 5S). Part of the small subunit (SSU) processome, composed of more than 70 proteins and the RNA chaperone small nucleolar RNA (snoRNA) U3.

Its subcellular location is the cytoplasm. The protein resides in the nucleus. It localises to the nucleolus. In terms of biological role, component of the small ribosomal subunit. The ribosome is a large ribonucleoprotein complex responsible for the synthesis of proteins in the cell. Part of the small subunit (SSU) processome, first precursor of the small eukaryotic ribosomal subunit. During the assembly of the SSU processome in the nucleolus, many ribosome biogenesis factors, an RNA chaperone and ribosomal proteins associate with the nascent pre-rRNA and work in concert to generate RNA folding, modifications, rearrangements and cleavage as well as targeted degradation of pre-ribosomal RNA by the RNA exosome. May play a role during erythropoiesis. This Xenopus laevis (African clawed frog) protein is Small ribosomal subunit protein eS1B (rps3a-b).